The primary structure comprises 159 residues: Thioredoxin O2, mitochondrial (159 aa).

Ser40 bears the Phosphoserine mark. The Thioredoxin domain occupies 43-159 (FAEGDRSSFV…LKSVMEQLYK (117 aa)). Active-site nucleophile residues include Cys83 and Cys86. An intrachain disulfide couples Cys83 to Cys86.

Belongs to the thioredoxin family. Plant O-type subfamily.

The protein resides in the mitochondrion. Thiol-disulfide oxidoreductase that may participate in various redox reactions. Possesses insulin disulfide bonds reducing activity. Reduced by thioredoxin reductases NTRA and NTRB. The protein is Thioredoxin O2, mitochondrial of Arabidopsis thaliana (Mouse-ear cress).